A 106-amino-acid chain; its full sequence is Thioredoxin-2 (106 aa).

The Thioredoxin domain occupies methionine 1–isoleucine 106. Catalysis depends on nucleophile residues cysteine 32 and cysteine 35. Cysteine 32 and cysteine 35 are disulfide-bonded.

The protein belongs to the thioredoxin family. As to quaternary structure, monomer.

In terms of biological role, participates in various redox reactions through the reversible oxidation of its active center dithiol to a disulfide and catalyzes dithiol-disulfide exchange reactions. As a reducing substrate of peroxiredoxin 1, thioredoxin 2 is preferred over thioredoxin 1. This Drosophila melanogaster (Fruit fly) protein is Thioredoxin-2.